Consider the following 702-residue polypeptide: Polyphosphate kinase (702 aa).

Position 55 (Asn-55) interacts with ATP. 2 residues coordinate Mg(2+): Arg-389 and Arg-419. His-449 functions as the Phosphohistidine intermediate in the catalytic mechanism. Residues Tyr-482, Arg-578, and His-606 each contribute to the ATP site.

Belongs to the polyphosphate kinase 1 (PPK1) family. It depends on Mg(2+) as a cofactor. In terms of processing, an intermediate of this reaction is the autophosphorylated ppk in which a phosphate is covalently linked to a histidine residue through a N-P bond.

The enzyme catalyses [phosphate](n) + ATP = [phosphate](n+1) + ADP. Functionally, catalyzes the reversible transfer of the terminal phosphate of ATP to form a long-chain polyphosphate (polyP). The polypeptide is Polyphosphate kinase (Bacillus cereus (strain ATCC 14579 / DSM 31 / CCUG 7414 / JCM 2152 / NBRC 15305 / NCIMB 9373 / NCTC 2599 / NRRL B-3711)).